The sequence spans 147 residues: Hemoglobin subunit beta (147 aa).

Residues 3-147 form the Globin domain; it reads EWTDKERSII…VVSALGKQYH (145 aa). Residues His64 and His93 each contribute to the heme b site.

The protein belongs to the globin family. Hb1 is a heterotetramer of two alpha chains and two beta chains. Red blood cells.

Its function is as follows. Involved in oxygen transport from gills to the various peripheral tissues. This Trematomus bernacchii (Emerald rockcod) protein is Hemoglobin subunit beta (hbb).